Reading from the N-terminus, the 332-residue chain is Homoarginine-6-hydroxylase 2-ODD-C23.1 (332 aa).

The region spanning 182 to 287 (PFWVMRLIGY…RVCVAFFYET (106 aa)) is the Fe2OG dioxygenase domain. His-210, Asp-212, and His-268 together coordinate Fe cation. Arg-278 is a 2-oxoglutarate binding site.

The protein belongs to the iron/ascorbate-dependent oxidoreductase family. Fe(2+) is required as a cofactor.

The protein localises to the cytoplasm. Its subcellular location is the cytosol. The enzyme catalyses L-homoarginine + 2-oxoglutarate + O2 = 6-hydroxy-L-homoarginine + succinate + CO2. Slightly inhibited by canavanine (Can), the 5-oxa-analog of arginine. Functionally, 2-oxoglutarate-dependent dioxygenase catalyzing homoarginine 6-hydroxylation thus producing 6-hydroxy-L-homoarginine. Guanidine (Gd) is in turn synthesized by the spontaneous conversion of 6-hydroxy-L-homoarginine to (S)-2-amino-6-oxohexanoate (RHEA:79843); guanidine is a nitrogen-rich compound that can serve as a defense or signaling substance. The chain is Homoarginine-6-hydroxylase 2-ODD-C23.1 from Arabidopsis thaliana (Mouse-ear cress).